The following is a 222-amino-acid chain: UPF0502 protein XAC4278 (222 aa).

The protein belongs to the UPF0502 family.

This Xanthomonas axonopodis pv. citri (strain 306) protein is UPF0502 protein XAC4278.